Here is a 146-residue protein sequence, read N- to C-terminus: 3-dehydroquinate dehydratase (146 aa).

The active-site Proton acceptor is Y24. Positions 73, 79, and 86 each coordinate substrate. H99 (proton donor) is an active-site residue. Substrate contacts are provided by residues 100–101 (LS) and R110.

This sequence belongs to the type-II 3-dehydroquinase family. As to quaternary structure, homododecamer.

The catalysed reaction is 3-dehydroquinate = 3-dehydroshikimate + H2O. It functions in the pathway metabolic intermediate biosynthesis; chorismate biosynthesis; chorismate from D-erythrose 4-phosphate and phosphoenolpyruvate: step 3/7. Catalyzes a trans-dehydration via an enolate intermediate. In Shewanella oneidensis (strain ATCC 700550 / JCM 31522 / CIP 106686 / LMG 19005 / NCIMB 14063 / MR-1), this protein is 3-dehydroquinate dehydratase.